A 512-amino-acid chain; its full sequence is Putative ribose/galactose/methyl galactoside import ATP-binding protein 2 (512 aa).

ABC transporter domains follow at residues 14–251 (IALT…VGRQ) and 262–507 (TSGN…TQRE). 46 to 53 (GENGAGKS) serves as a coordination point for ATP.

The protein belongs to the ABC transporter superfamily. Carbohydrate importer 2 (CUT2) (TC 3.A.1.2) family.

The protein localises to the cell inner membrane. The catalysed reaction is D-ribose(out) + ATP + H2O = D-ribose(in) + ADP + phosphate + H(+). It catalyses the reaction D-galactose(out) + ATP + H2O = D-galactose(in) + ADP + phosphate + H(+). Part of an ABC transporter complex involved in carbohydrate import. Could be involved in ribose, galactose and/or methyl galactoside import. Responsible for energy coupling to the transport system. This chain is Putative ribose/galactose/methyl galactoside import ATP-binding protein 2, found in Burkholderia cenocepacia (strain HI2424).